Consider the following 529-residue polypeptide: 1,4-beta-D-glucan cellobiohydrolase xynA (529 aa).

The first 25 residues, 1-25 (MSALNSFNMYKSALILGSLLATAGA), serve as a signal peptide directing secretion. The catalytic stretch occupies residues 26-456 (QQIGTYTAET…SDIKVGPFNS (431 aa)). N-linked (GlcNAc...) asparagine glycosylation is found at Asn70 and Asn219. Residue Glu234 is the Nucleophile of the active site. The Proton donor role is filled by Glu239. The N-linked (GlcNAc...) asparagine glycan is linked to Asn413. Positions 413–438 (NETGTPGAARGSCPTTSGNPKTVESQ) are disordered. The span at 425-438 (CPTTSGNPKTVESQ) shows a compositional bias: polar residues. Asn455 carries an N-linked (GlcNAc...) asparagine glycan. The interval 457-493 (TFSGGTSTGGSTTTTASGTTSTKASTTSTSSTSTGTG) is thr-rich linker. Positions 460 to 491 (GGTSTGGSTTTTASGTTSTKASTTSTSSTSTG) are disordered. The CBM1 domain maps to 493 to 529 (GVAAHWGQCGGQGWTGPTTCASGTTCTVVNPYYSQCL). Cystine bridges form between Cys501–Cys518 and Cys512–Cys528.

It belongs to the glycosyl hydrolase 7 (cellulase C) family.

Its subcellular location is the secreted. It catalyses the reaction Hydrolysis of (1-&gt;4)-beta-D-glucosidic linkages in cellulose and cellotetraose, releasing cellobiose from the non-reducing ends of the chains.. Its activity is regulated as follows. Cellobiose inhibits xynA at high concentrations. Functionally, the biological conversion of cellulose to glucose generally requires three types of hydrolytic enzymes: (1) Endoglucanases which cut internal beta-1,4-glucosidic bonds; (2) Exocellobiohydrolases that cut the disaccharide cellobiose from the non-reducing end of the cellulose polymer chain; (3) Beta-1,4-glucosidases which hydrolyze the cellobiose and other short cello-oligosaccharides to glucose. This is 1,4-beta-D-glucan cellobiohydrolase xynA (xynA) from Talaromyces funiculosus (Fruitlet core rot fungus).